The following is a 110-amino-acid chain: Large ribosomal subunit protein uL22 (110 aa).

Belongs to the universal ribosomal protein uL22 family. As to quaternary structure, part of the 50S ribosomal subunit.

This protein binds specifically to 23S rRNA; its binding is stimulated by other ribosomal proteins, e.g. L4, L17, and L20. It is important during the early stages of 50S assembly. It makes multiple contacts with different domains of the 23S rRNA in the assembled 50S subunit and ribosome. In terms of biological role, the globular domain of the protein is located near the polypeptide exit tunnel on the outside of the subunit, while an extended beta-hairpin is found that lines the wall of the exit tunnel in the center of the 70S ribosome. This Leptospira borgpetersenii serovar Hardjo-bovis (strain JB197) protein is Large ribosomal subunit protein uL22.